A 275-amino-acid chain; its full sequence is Formamidopyrimidine-DNA glycosylase (275 aa).

Residue Pro2 is the Schiff-base intermediate with DNA of the active site. The active-site Proton donor is Glu3. The active-site Proton donor; for beta-elimination activity is Lys58. Residues His91 and Arg110 each coordinate DNA. The FPG-type zinc finger occupies 238-272 (QVYGQTGKPCPRCGQAIVKLKVGGRGTHICPKCQK). The Proton donor; for delta-elimination activity role is filled by Arg262.

This sequence belongs to the FPG family. Monomer. The cofactor is Zn(2+).

It carries out the reaction Hydrolysis of DNA containing ring-opened 7-methylguanine residues, releasing 2,6-diamino-4-hydroxy-5-(N-methyl)formamidopyrimidine.. The enzyme catalyses 2'-deoxyribonucleotide-(2'-deoxyribose 5'-phosphate)-2'-deoxyribonucleotide-DNA = a 3'-end 2'-deoxyribonucleotide-(2,3-dehydro-2,3-deoxyribose 5'-phosphate)-DNA + a 5'-end 5'-phospho-2'-deoxyribonucleoside-DNA + H(+). In terms of biological role, involved in base excision repair of DNA damaged by oxidation or by mutagenic agents. Acts as a DNA glycosylase that recognizes and removes damaged bases. Has a preference for oxidized purines, such as 7,8-dihydro-8-oxoguanine (8-oxoG). Has AP (apurinic/apyrimidinic) lyase activity and introduces nicks in the DNA strand. Cleaves the DNA backbone by beta-delta elimination to generate a single-strand break at the site of the removed base with both 3'- and 5'-phosphates. The chain is Formamidopyrimidine-DNA glycosylase from Streptococcus pyogenes serotype M6 (strain ATCC BAA-946 / MGAS10394).